The chain runs to 275 residues: Melanoma-associated antigen B5 (275 aa).

Positions 1–33 are disordered; the sequence is MTSAGVFNAGSDERANSRDEEYPCSSEVSPSTE. The segment covering 11–21 has biased composition (basic and acidic residues); that stretch reads SDERANSRDEE. The segment covering 23–33 has biased composition (low complexity); the sequence is PCSSEVSPSTE. Positions 40 to 239 constitute an MAGE domain; it reads INIKVGLLEQ…GAFSSQYEEA (200 aa).

In terms of tissue distribution, expressed in testis. Not expressed in other normal tissues, but is expressed in tumors of different histological origins.

This chain is Melanoma-associated antigen B5 (MAGEB5), found in Homo sapiens (Human).